The sequence spans 467 residues: ATP synthase subunit beta (467 aa).

154-161 (GGAGVGKT) serves as a coordination point for ATP.

The protein belongs to the ATPase alpha/beta chains family. In terms of assembly, F-type ATPases have 2 components, CF(1) - the catalytic core - and CF(0) - the membrane proton channel. CF(1) has five subunits: alpha(3), beta(3), gamma(1), delta(1), epsilon(1). CF(0) has three main subunits: a(1), b(2) and c(9-12). The alpha and beta chains form an alternating ring which encloses part of the gamma chain. CF(1) is attached to CF(0) by a central stalk formed by the gamma and epsilon chains, while a peripheral stalk is formed by the delta and b chains.

It localises to the cell inner membrane. It carries out the reaction ATP + H2O + 4 H(+)(in) = ADP + phosphate + 5 H(+)(out). Functionally, produces ATP from ADP in the presence of a proton gradient across the membrane. The catalytic sites are hosted primarily by the beta subunits. This chain is ATP synthase subunit beta, found in Leptospira borgpetersenii serovar Hardjo-bovis (strain JB197).